The following is an 822-amino-acid chain: Fibroblast growth factor receptor 1 (822 aa).

The signal sequence occupies residues 1-21 (MWGWKCLLFWAVLVTATLCTA). The Extracellular segment spans residues 22-376 (RPAPTLPEQA…AVMTSPLYLE (355 aa)). Residues 25 to 119 (PTLPEQAQPW…DTTYFSVNVS (95 aa)) form the Ig-like C2-type 1 domain. A disulfide bond links cysteine 55 and cysteine 101. Residues asparagine 77 and asparagine 117 are each glycosylated (N-linked (GlcNAc...) asparagine). The interval 120–162 (DALPSSEDDDDDDDSSSEEKETDNTKPNRRPVAPYWTSPEKME) is disordered. Acidic residues predominate over residues 125–135 (SEDDDDDDDSS). Basic and acidic residues predominate over residues 136-145 (SEEKETDNTK). Ig-like C2-type domains are found at residues 158-246 (PEKM…YQLD) and 255-357 (PILQ…AWLT). Residues 160–177 (KMEKKLHAVPAAKTVKFK) form a heparin-binding region. A disulfide bond links cysteine 178 and cysteine 230. N-linked (GlcNAc...) asparagine glycans are attached at residues asparagine 227, asparagine 240, asparagine 264, asparagine 296, asparagine 317, and asparagine 330. Cysteines 277 and 341 form a disulfide. A helical membrane pass occupies residues 377-397 (IIIYCTGAFLISCMLGSVIIY). Residues 398–822 (KMKSGTKKSD…QLANSGLKRR (425 aa)) are Cytoplasmic-facing. Tyrosine 463 carries the phosphotyrosine; by autocatalysis modification. The Protein kinase domain maps to 478-767 (LVLGKPLGEG…VALTSNQEYL (290 aa)). ATP is bound by residues 484–490 (LGEGCFG), lysine 514, 562–564 (EYA), and asparagine 568. Residues tyrosine 583 and tyrosine 585 each carry the phosphotyrosine; by autocatalysis modification. The active-site Proton acceptor is the aspartate 623. The ATP site is built by arginine 627 and aspartate 641. Phosphotyrosine; by autocatalysis occurs at positions 653, 654, 730, and 766. Over residues 782–792 (DTRSSTCSSGE) the composition is skewed to polar residues. A disordered region spans residues 782-822 (DTRSSTCSSGEDSVFSHEPLPEEPCLPRHPTQLANSGLKRR).

This sequence belongs to the protein kinase superfamily. Tyr protein kinase family. Fibroblast growth factor receptor subfamily. In terms of assembly, monomer. Homodimer after ligand binding. Interacts predominantly with FGF1 and FGF2, but can also interact with FGF3, FGF4, FGF5, FGF6, FGF8, FGF10, FGF19, FGF21, FGF22 and FGF23 (in vitro). Ligand specificity is determined by tissue-specific expression of isoforms, and differences in the third Ig-like domain are crucial for ligand specificity. Affinity for fibroblast growth factors (FGFs) is increased by heparan sulfate glycosaminoglycans that function as coreceptors. Likewise, KLB increases the affinity for FGF19, FGF21 and FGF23. Interacts (phosphorylated on Tyr-766) with PLCG1 (via SH2 domains). Interacts with FRS2. Interacts with RPS6KA1. Interacts (via C-terminus) with NEDD4 (via WW3 domain). Interacts with KL. Interacts with SHB (via SH2 domain). Interacts with GRB10. Interacts with ANOS1; this interaction does not interfere with FGF2-binding to FGFR1, but prevents binding of heparin-bound FGF2. Interacts with SOX2 and SOX3. Interacts with FLRT1, FLRT2 and FLRT3. Found in a ternary complex with FGF1 and ITGAV:ITGB3. Autophosphorylated. Binding of FGF family members together with heparan sulfate proteoglycan or heparin promotes receptor dimerization and autophosphorylation on tyrosine residues. Autophosphorylation occurs in trans between the two FGFR molecules present in the dimer and proceeds in a highly ordered manner. Initial autophosphorylation at Tyr-653 increases the kinase activity by a factor of 50 to 100. After this, Tyr-583 becomes phosphorylated, followed by phosphorylation of Tyr-463, Tyr-766, Tyr-583 and Tyr-585. In a third stage, Tyr-654 is autophosphorylated, resulting in a further tenfold increase of kinase activity. Phosphotyrosine residues provide docking sites for interacting proteins and so are crucial for FGFR1 function and its regulation. Post-translationally, ubiquitinated. FGFR1 is rapidly ubiquitinated by NEDD4 after autophosphorylation, leading to internalization and lysosomal degradation. CBL is recruited to activated FGFR1 via FRS2 and GRB2, and mediates ubiquitination and subsequent degradation of FGFR1. In terms of processing, N-glycosylated in the endoplasmic reticulum. The N-glycan chains undergo further maturation to an Endo H-resistant form in the Golgi apparatus. In terms of tissue distribution, widely expressed.

It localises to the cell membrane. The protein localises to the nucleus. It is found in the cytoplasm. The protein resides in the cytosol. Its subcellular location is the cytoplasmic vesicle. The enzyme catalyses L-tyrosyl-[protein] + ATP = O-phospho-L-tyrosyl-[protein] + ADP + H(+). With respect to regulation, present in an inactive conformation in the absence of bound ligand. Ligand binding leads to dimerization and activation by sequential autophosphorylation on tyrosine residues. In terms of biological role, tyrosine-protein kinase that acts as a cell-surface receptor for fibroblast growth factors and plays an essential role in the regulation of embryonic development, cell proliferation, differentiation and migration. Required for normal mesoderm patterning and correct axial organization during embryonic development, normal skeletogenesis and normal development of the gonadotropin-releasing hormone (GnRH) neuronal system. Phosphorylates PLCG1, FRS2, GAB1 and SHB. Ligand binding leads to the activation of several signaling cascades. Activation of PLCG1 leads to the production of the cellular signaling molecules diacylglycerol and inositol 1,4,5-trisphosphate. Phosphorylation of FRS2 triggers recruitment of GRB2, GAB1, PIK3R1 and SOS1, and mediates activation of RAS, MAPK1/ERK2, MAPK3/ERK1 and the MAP kinase signaling pathway, as well as of the AKT1 signaling pathway. Promotes phosphorylation of SHC1, STAT1 and PTPN11/SHP2. In the nucleus, enhances RPS6KA1 and CREB1 activity and contributes to the regulation of transcription. FGFR1 signaling is down-regulated by IL17RD/SEF, and by FGFR1 ubiquitination, internalization and degradation. The polypeptide is Fibroblast growth factor receptor 1 (Fgfr1) (Mus musculus (Mouse)).